The following is a 192-amino-acid chain: Anthrone oxygenase (192 aa).

A run of 3 helical transmembrane segments spans residues 12–32 (IVTGSFLSGAMITLSTITVPV), 54–74 (GHISLPTISIATAILYFYIAA), and 86–106 (AALVGFLTIVMVPFTWIVMSS). N-linked (GlcNAc...) asparagine glycosylation is found at Asn-130, Asn-138, and Asn-147. Residues 172 to 192 (MHLVRSLFPLMAAVLGVGICV) traverse the membrane as a helical segment.

This sequence belongs to the anthrone oxygenase family.

The protein resides in the membrane. It carries out the reaction emodin anthrone + O2 = emodin + H2O + H(+). The protein operates within secondary metabolite biosynthesis. Functionally, anthrone oxygenase; part of the gene cluster that mediates the biosynthesis of monodictyphenone, a prenyl xanthone derivative. The pathway begins with the synthesis of atrochrysone thioester by the polyketide synthase (PKS) mdpG. The atrochrysone carboxyl ACP thioesterase mdpF then breaks the thioester bond and releases the atrochrysone carboxylic acid from mdpG. The atrochrysone carboxylic acid is then converted to atrochrysone which is further transformed into emodin anthrone by mdpH-1 and mdpH-2. Emodin is further modified to yield monodictyphenone via several steps involving mdpB, mdpC mdpJ, mdpK and mdpL. These enzymes with xptA, xptB and xptC are also proposed to be involved in the synthesis of shamixanthone from emodin. Especially, direct reduction of emodin by the short chain dehydrogenase mdpC followed by dehydration catalyzed by the scytalone dehydratase-like protein mdpB gives loss of oxygen and formation of chrysophanol intermediate in two simple steps. This chain is Anthrone oxygenase, found in Emericella nidulans (strain FGSC A4 / ATCC 38163 / CBS 112.46 / NRRL 194 / M139) (Aspergillus nidulans).